The following is a 233-amino-acid chain: tRNA (guanine-N(7)-)-methyltransferase (233 aa).

The segment at 1–36 (MSEFDPNPPRRNFYGRRHGKTLRQSQKGYLSEDLGS) is disordered. S-adenosyl-L-methionine-binding residues include E68, E93, D120, and D142. D142 is a catalytic residue. Substrate is bound by residues K146, D178, and 211 to 214 (TRYE).

Belongs to the class I-like SAM-binding methyltransferase superfamily. TrmB family.

The enzyme catalyses guanosine(46) in tRNA + S-adenosyl-L-methionine = N(7)-methylguanosine(46) in tRNA + S-adenosyl-L-homocysteine. Its pathway is tRNA modification; N(7)-methylguanine-tRNA biosynthesis. Functionally, catalyzes the formation of N(7)-methylguanine at position 46 (m7G46) in tRNA. This is tRNA (guanine-N(7)-)-methyltransferase from Paracoccus denitrificans (strain Pd 1222).